We begin with the raw amino-acid sequence, 465 residues long: MAFNDDNFMLKNEAAKRLYQQIKDQPIFDYHCHLDPKEIFEDKVYDNIVDLWLGGDHYKWRLMRANGISEEEITGSASKLDKFKAFARTLQRSYGNPVYHWSVMELKNVFGVCELLTEDNAEEIYHRINAYLVEHQISPRKLIADSRVRFIGTTDHPLDDLAWHKRLTADDTFETVVAPTFRPDEAFIEHQRFADFVARLAQATGRTITDFKSFIAAMEERIAYFAENGCKASDISFTEIVFEAAEPEQLDRLMTRVLEGYQPQPLEIKQWQTAVFAELCRLYKHYGFVTQVHFGALRNNHSAIFNKLGADVGVDSLGDQAALAINMNRLLDHLVQRDSLPKMIWYNLNPSYNITVPNTLANFQANENGIAGYLQFGAGWWFADTKLGMISQMNALAEQGLLANFVGMLTDSRSFLSYQRHDYFRRILSTYLGEWIEEGEVPEDYQVLGSMAKDIAYNNAIQYFS.

It belongs to the metallo-dependent hydrolases superfamily. Uronate isomerase family.

It carries out the reaction D-glucuronate = D-fructuronate. The enzyme catalyses aldehydo-D-galacturonate = keto-D-tagaturonate. Its pathway is carbohydrate metabolism; pentose and glucuronate interconversion. The sequence is that of Uronate isomerase from Streptococcus equi subsp. zooepidemicus (strain MGCS10565).